A 916-amino-acid chain; its full sequence is Extracellular signal-regulated kinase 7 (916 aa).

The 295-residue stretch at Phe25–Val319 folds into the Protein kinase domain. Residues Met31 to Val39 and Lys54 each bind ATP. The active-site Proton acceptor is the Asp149. Polar residues-rich tracts occupy residues Cys364–Ser376 and Gln390–Pro403. Disordered regions lie at residues Cys364–Arg419, Pro452–Pro477, Pro588–Arg608, Lys711–Tyr742, Glu792–Asp813, and Cys883–Asn916. Basic and acidic residues-rich tracts occupy residues Glu590–Arg608, Arg715–Leu730, and Gly800–Gly811. The segment covering Cys883–His892 has biased composition (basic residues). Residues Ala894 to Glu903 are compositionally biased toward basic and acidic residues.

Belongs to the protein kinase superfamily. Ser/Thr protein kinase family.

The catalysed reaction is L-seryl-[protein] + ATP = O-phospho-L-seryl-[protein] + ADP + H(+). It carries out the reaction L-threonyl-[protein] + ATP = O-phospho-L-threonyl-[protein] + ADP + H(+). In terms of biological role, atypical MAPK protein that regulates protein secretion in a kinase activity-dependent manner. In response to starvation regulates protein secretion by mediating transitional endoplasmic reticulum site disassembly. Mediates inhibition of insulin-like peptide secretion upon disturbed ribosome biogenesis and acts as a downstream effector of TP53. In Drosophila melanogaster (Fruit fly), this protein is Extracellular signal-regulated kinase 7.